The chain runs to 162 residues: MWRVEFVACLRPSCQFCTAMCSILSAGRAWRMMNFRQRMGWIGVSLYLFVSAAAFYYVFEINETYNRLALEHVQLKPQEPHRGTTWTHSLKARLLSLPFWLWAALFLIPYFQVFLFLYSCTRADPKTVGYCIIPICLAIICNRHQSFVKASNQISRLQLIDT.

2 consecutive transmembrane segments (helical) span residues 39–59 (MGWI…YYVF) and 97–117 (LPFW…FLFL).

Belongs to the LYSET family.

It localises to the golgi apparatus membrane. Its function is as follows. Required for mannose-6-phosphate-dependent trafficking of lysosomal enzymes. LYSET bridges GlcNAc-1-phosphate transferase (GNPTAB), to the membrane-bound transcription factor site-1 protease (MBTPS1), thus allowing proteolytic activation of the GNPTAB. GNPTAB is involved in the regulation of M6P-dependent Golgi-to-lysosome trafficking of lysosomal enzymes. LYSET is thus an essential factor for maturation and delivery of lysosomal hydrolases. This chain is Lysosomal enzyme trafficking factor (lyset), found in Xenopus tropicalis (Western clawed frog).